The sequence spans 379 residues: Cobalt-precorrin-5B C(1)-methyltransferase (379 aa).

Belongs to the CbiD family.

It catalyses the reaction Co-precorrin-5B + S-adenosyl-L-methionine = Co-precorrin-6A + S-adenosyl-L-homocysteine. Its pathway is cofactor biosynthesis; adenosylcobalamin biosynthesis; cob(II)yrinate a,c-diamide from sirohydrochlorin (anaerobic route): step 6/10. In terms of biological role, catalyzes the methylation of C-1 in cobalt-precorrin-5B to form cobalt-precorrin-6A. This is Cobalt-precorrin-5B C(1)-methyltransferase from Salmonella schwarzengrund (strain CVM19633).